Reading from the N-terminus, the 245-residue chain is Ninjurin-A (245 aa).

The Extracellular segment spans residues 1–170; it reads MSNLEHITLE…TSSQHPYFYP (170 aa). 2 N-linked (GlcNAc...) asparagine glycosylation sites follow: Asn-19 and Asn-28. Residues 32-101 are disordered; sequence HSYGGAIDGR…NVNVNVPNGG (70 aa). The span at 92–101 shows a compositional bias: low complexity; sequence NVNVNVPNGG. A helix alpha1 region spans residues 135-146; that stretch reads KKTLAQGMMDLA. The helix alpha2 stretch occupies residues 149–165; sequence SANANQLRYVLETSSQH. A helical transmembrane segment spans residues 171 to 191; sequence SLLFISLSIIFQIAVGVGLIL. At 192–211 the chain is on the cytoplasmic side; sequence NGQYNIKNGHDICRANRINN. The helical transmembrane segment at 212–232 threads the bilayer; it reads YTVSGIFIVTVVNVLISAFTV. Residues 233–245 are Extracellular-facing; sequence DRDTVPALPANTT.

The protein belongs to the ninjurin family. Homooligomer. Post-translationally, cleaved by Mmp1 protease to generate the Secreted ninjurin-A form.

The protein localises to the cell membrane. The protein resides in the secreted. Effector of non-apoptotic necrotic cell death that mediates plasma membrane rupture (cytolysis): oligomerizes in response to death stimuli and promotes plasma membrane rupture by introducing hydrophilic faces of 2 alpha helices into the hydrophobic membrane, leading to release intracellular molecules that propagate the inflammatory response. Also acts as a homophilic transmembrane adhesion molecule that promotes cell adhesion by mediating homophilic interactions via its extracellular region. Functionally, secreted form generated by cleavage, which acts as a negative regulator of cell adhesion. Promotes the loss of cell adhesion in a cell non-autonomous manner. This chain is Ninjurin-A, found in Drosophila melanogaster (Fruit fly).